The following is a 436-amino-acid chain: MANVVVIGAQWGDEGKGKITDLLSRSADVVVRYQGGVNAGHTIVVDDKVLKLHLIPSGILYEDTTCLIGSGTVVDPKILLKEIDMLIENGIDISGLKISSTSHVTMPYHRLLDEAMEADRGSNKIGTTGRGIGPTYADKSQRNGIRIRDLLNEDRLKDVLEIPLKEKNGVLEKIYGIRPLCKDEIIKEYLDYGKRLSKHVVDCTRTIHSAAKNKQNILFEGAQGTLLDLDHGTYPFVTSSNPISGGACIGAGVGPTLIDRVIGVAKAYTTRVGEGPFVTELQGSINDQLCDRGSEFGTTTGRRRRCGWFDGVIGKYAVYVNGLDCLAVTKLDVLDELDEIQVCIAYELDGKEIDYFPTNSDDLKKCKPIFKKLKGWQCSTANCRKLSDLPENAMNYLRFLAELMEVPIAIVSLGANRDQTIVIEDPIHGPKRALLR.

GTP is bound by residues 12-18 (GDEGKGK) and 40-42 (GHT). Asp-13 serves as the catalytic Proton acceptor. 2 residues coordinate Mg(2+): Asp-13 and Gly-40. IMP-binding positions include 13 to 16 (DEGK), 38 to 41 (NAGH), Thr-128, Arg-142, Gln-223, Thr-238, and Arg-302. The Proton donor role is filled by His-41. 298–304 (TTTGRRR) serves as a coordination point for substrate. GTP-binding positions include Arg-304, 330 to 332 (KLD), and 412 to 414 (SLG).

It belongs to the adenylosuccinate synthetase family. As to quaternary structure, homodimer. It depends on Mg(2+) as a cofactor.

The protein resides in the cytoplasm. It catalyses the reaction IMP + L-aspartate + GTP = N(6)-(1,2-dicarboxyethyl)-AMP + GDP + phosphate + 2 H(+). It functions in the pathway purine metabolism; AMP biosynthesis via de novo pathway; AMP from IMP: step 1/2. Its function is as follows. Plays an important role in the de novo pathway of purine nucleotide biosynthesis. Catalyzes the first committed step in the biosynthesis of AMP from IMP. This is Adenylosuccinate synthetase from Prochlorococcus marinus (strain MIT 9515).